Consider the following 305-residue polypeptide: MTAVLPLPHPLADPAPRDPRQRLQREQLRLGKRLQRQVGQAIADFGMISPGDKIMVCLSGGKDSYTMLDMLLQLQRKAPVPFTLVAVNLDQKQPDFPAHVLPAYLDALGVPFDIVEQDTYSVVSRVVPAGKTMCSLCSRLRRGALYAYAQTHGVTKIALGHHRDDIVATFFMNLFHHARLAAMAPKLRSDDGAHVVIRPLAYVREAHIAAYAQARQFPIIPCNLCGSQENLQRQQVGKMLQHWDHEQPGRVEQIARALGDVRPEQLADRTLFDFLALGRSGDAPPDLAPDPGAWLTASDATHDSD.

The disordered stretch occupies residues 1–20 (MTAVLPLPHPLADPAPRDPR). A PP-loop motif motif is present at residues 59–64 (SGGKDS). 3 residues coordinate [4Fe-4S] cluster: Cys134, Cys137, and Cys225. Residues 282-293 (DAPPDLAPDPGA) are compositionally biased toward low complexity. The tract at residues 282 to 305 (DAPPDLAPDPGAWLTASDATHDSD) is disordered.

Belongs to the TtcA family. Homodimer. Mg(2+) serves as cofactor. It depends on [4Fe-4S] cluster as a cofactor.

It localises to the cytoplasm. It carries out the reaction cytidine(32) in tRNA + S-sulfanyl-L-cysteinyl-[cysteine desulfurase] + AH2 + ATP = 2-thiocytidine(32) in tRNA + L-cysteinyl-[cysteine desulfurase] + A + AMP + diphosphate + H(+). The protein operates within tRNA modification. Functionally, catalyzes the ATP-dependent 2-thiolation of cytidine in position 32 of tRNA, to form 2-thiocytidine (s(2)C32). The sulfur atoms are provided by the cysteine/cysteine desulfurase (IscS) system. The polypeptide is tRNA-cytidine(32) 2-sulfurtransferase (Xanthomonas oryzae pv. oryzae (strain MAFF 311018)).